Here is a 262-residue protein sequence, read N- to C-terminus: Shikimate dehydrogenase (NADP(+)) (262 aa).

Shikimate is bound by residues 15–17 (SRS) and threonine 62. Lysine 66 acts as the Proton acceptor in catalysis. Glutamate 78 serves as a coordination point for NADP(+). The shikimate site is built by asparagine 87 and aspartate 102. NADP(+)-binding positions include 126-130 (GAGGA), 150-155 (NRTLAR), and methionine 214. Tyrosine 216 provides a ligand contact to shikimate. Residue glycine 236 coordinates NADP(+).

This sequence belongs to the shikimate dehydrogenase family. In terms of assembly, homodimer.

It carries out the reaction shikimate + NADP(+) = 3-dehydroshikimate + NADPH + H(+). Its pathway is metabolic intermediate biosynthesis; chorismate biosynthesis; chorismate from D-erythrose 4-phosphate and phosphoenolpyruvate: step 4/7. Functionally, involved in the biosynthesis of the chorismate, which leads to the biosynthesis of aromatic amino acids. Catalyzes the reversible NADPH linked reduction of 3-dehydroshikimate (DHSA) to yield shikimate (SA). The protein is Shikimate dehydrogenase (NADP(+)) of Acinetobacter baumannii (strain AB307-0294).